We begin with the raw amino-acid sequence, 1043 residues long: MLKFIEKIFGSKHDRDIKRLWPIVDEINEHFESYKSLSDEALRGKTQELKEQIKEHISDIEQSIITEKKQLENLELTIEEAESIQEKIEGIEKELHDATEEALNEVLPEAFAIVKETARRLVGKEYPVMGSTNIWNMVPYDVQLIGGIVLHQGKISEMATGEGKTLVAVLPTFLNALTGKGVHIVTVNDYLAQRDKEWMTPIFEFHGLTVGAILGNMPPYQRKEQYACDITYGTNNEFGFDYLRDNMAGDPEDVVQREFNYAIIDEVDSVLIDEARTPLIISGPVPNADVNKYNEIKPRVERLVRAQQNLVAKILTETEKAIKTPNKADKDAEFNIGLGLLRAKRGQPKNNKFIKLIGEPNAARFMQTVENEFLKDNARRMHEVDEELYFSIDEKNHTIELTEKGREFMTDTHEDPDFFVLPDVGTEISKIDSDATLSEQDKVQKKDELYRLFSVRSERIHNVSQLLRAFSLYTRDDEYVVQDGKVLIVDEFTGRILPGRRYSDGLHQALEAKEGVKIEGETQTMATITLQNFFRLYKKLAGMTGTAETEASEFFEIYKLDVVVIPTNKPIVRKDQEDLIFKTKREKYNAVINKIQELQEKGQPVLVGTTSVDVSETLSRMLKMKHIEHNVLNAKQHAREADVVANAGHKRAVTIATNMAGRGTDIKLGEGITEVGGLFILGTERHESRRIDRQLRGRAGRQGDPGTSVFYVSLEDDLMRLFGSDRVISVMDKLGHQEGDVIEHSMVTKSIERAQRRVEEQNFAIRKRLLEYDNVMNQQREVIYTRRRKALEKRRLRIEIFDLLRDYADKHAEKFYQALDKDGLEEQVLRELSVDIKLTVDAFEKLGEDGIADKIYNTAVDFYKRKEELLGNDIMAQIEKYSVLGVIDQKWREHLRDIDDLKEGINLRAYGQKDPLLEYKQEAFKLFVDLLEEISTETLSFAFKLFPQQAAERATFIPERSRVRQERLVAQHEVAQSAYATAAPAAETTTTAKAADAARQQPPAAENEEQKRQPVHVEKTPGRNDPCPCGSGKKYKHCHGRNA.

ATP is bound by residues Gln143, 161-165 (GEGKT), and Asp665. The span at 980 to 1005 (ATAAPAAETTTTAKAADAARQQPPAA) shows a compositional bias: low complexity. The interval 980–1043 (ATAAPAAETT…KYKHCHGRNA (64 aa)) is disordered. Over residues 1008-1022 (EEQKRQPVHVEKTPG) the composition is skewed to basic and acidic residues. Zn(2+)-binding residues include Cys1027, Cys1029, Cys1038, and His1039. A compositionally biased stretch (basic residues) spans 1033 to 1043 (KKYKHCHGRNA).

The protein belongs to the SecA family. As to quaternary structure, monomer and homodimer. Part of the essential Sec protein translocation apparatus which comprises SecA, SecYEG and auxiliary proteins SecDF. Other proteins may also be involved. Requires Zn(2+) as cofactor.

The protein localises to the cell inner membrane. It is found in the cytoplasm. It carries out the reaction ATP + H2O + cellular proteinSide 1 = ADP + phosphate + cellular proteinSide 2.. Functionally, part of the Sec protein translocase complex. Interacts with the SecYEG preprotein conducting channel. Has a central role in coupling the hydrolysis of ATP to the transfer of proteins into and across the cell membrane, serving as an ATP-driven molecular motor driving the stepwise translocation of polypeptide chains across the membrane. In Chloroherpeton thalassium (strain ATCC 35110 / GB-78), this protein is Protein translocase subunit SecA.